The sequence spans 116 residues: G antigen 2B/2C (116 aa).

The segment at 1 to 116 (MSWRGRSTYR…PEEGEKQSQC (116 aa)) is disordered. 2 stretches are compositionally biased toward acidic residues: residues 31–44 (FSDE…EEGE) and 86–95 (ECEDGPDGQE). The span at 102–116 (EEVKTPEEGEKQSQC) shows a compositional bias: basic and acidic residues.

Belongs to the GAGE family. As to expression, expressed in a variety of tumor tissues but not in normal tissues, except testis.

Its function is as follows. Antigen, recognized on melanoma by autologous cytolytic T-lymphocytes. The sequence is that of G antigen 2B/2C (GAGE2B) from Homo sapiens (Human).